The following is a 423-amino-acid chain: COP9 signalosome complex subunit 3 (423 aa).

The PCI domain occupies 197–365 (NFERALYFYE…GMVCFHDNPE (169 aa)). A disordered region spans residues 402–423 (QFVQKSMGSQEDDSGTKPSSYS).

This sequence belongs to the CSN3 family. Component of the CSN complex, probably composed of COPS1, COPS2, COPS3, COPS4, COPS5, COPS6, COPS7, COPS8 and COPS9.

Its subcellular location is the cytoplasm. It is found in the nucleus. Component of the COP9 signalosome complex (CSN), a complex involved in various cellular and developmental processes. The CSN complex is an essential regulator of the ubiquitin (Ubl) conjugation pathway by mediating the deneddylation of the cullin subunits of E3 ligase complexes, leading to modify the Ubl ligase activity. This Gallus gallus (Chicken) protein is COP9 signalosome complex subunit 3 (COPS3).